Consider the following 577-residue polypeptide: CDPK-related kinase 7 (577 aa).

The disordered stretch occupies residues 1–38; the sequence is MGLCHGKPIEQQSKNLPISNEIEETPKNSSQKAKSSGF. Gly-2 is lipidated: N-myristoyl glycine. The Protein kinase domain occupies 124–386; it reads YEIDGEVGRG…AAQALCHPWL (263 aa). ATP is bound by residues 130–138 and Lys-156; that span reads VGRGHFGYT. The active-site Proton acceptor is Asp-252. A Phosphoserine modification is found at Ser-292. Position 334 is a phosphoserine; by CPK1, CPK10 and CPK34 (Ser-334). The autoinhibitory domain stretch occupies residues 391–421; the sequence is ELKIPSDMIIYKLVKVYIMSSSLRKSALAAL. Residues 410–430 are calmodulin binding (CaMBD); it reads SSSLRKSALAALAKTLTVPQL. 4 consecutive EF-hand domains span residues 428-464, 465-500, 501-540, and 543-572; these read PQLT…STEA, TKDS…VYQL, EAME…GPSV, and HVVL…VSSR. 10 residues coordinate Ca(2+): Ser-443, Asn-445, Tyr-447, Lys-484, Glu-489, Asp-520, Asn-522, Glu-529, Asp-554, and Lys-556. Ser-558 bears the Phosphoserine mark.

It belongs to the protein kinase superfamily. Ser/Thr protein kinase family. CDPK subfamily. In terms of assembly, binds calmodulin (CaM) in a calcium-dependent manner. In terms of processing, autophosphorylated.

It is found in the membrane. The enzyme catalyses L-seryl-[protein] + ATP = O-phospho-L-seryl-[protein] + ADP + H(+). It catalyses the reaction L-threonyl-[protein] + ATP = O-phospho-L-threonyl-[protein] + ADP + H(+). Its activity is regulated as follows. Activated by calcium and calmodulin. Autophosphorylation may play an important role in the regulation of the kinase activity. Functionally, may play a role in signal transduction pathways that involve calcium as a second messenger. In Arabidopsis thaliana (Mouse-ear cress), this protein is CDPK-related kinase 7 (CRK7).